Consider the following 470-residue polypeptide: Ribulose bisphosphate carboxylase large chain (470 aa).

Positions 115 and 165 each coordinate substrate. The Proton acceptor role is filled by K167. Position 169 (K169) interacts with substrate. 3 residues coordinate Mg(2+): K193, D195, and E196. K193 carries the N6-carboxylysine modification. The active-site Proton acceptor is the H286. Substrate-binding residues include R287, H319, and S371.

This sequence belongs to the RuBisCO large chain family. Type I subfamily. In terms of assembly, heterohexadecamer of 8 large chains and 8 small chains. It depends on Mg(2+) as a cofactor.

The protein localises to the carboxysome. The enzyme catalyses 2 (2R)-3-phosphoglycerate + 2 H(+) = D-ribulose 1,5-bisphosphate + CO2 + H2O. The catalysed reaction is D-ribulose 1,5-bisphosphate + O2 = 2-phosphoglycolate + (2R)-3-phosphoglycerate + 2 H(+). In terms of biological role, ruBisCO catalyzes two reactions: the carboxylation of D-ribulose 1,5-bisphosphate, the primary event in carbon dioxide fixation, as well as the oxidative fragmentation of the pentose substrate in the photorespiration process. Both reactions occur simultaneously and in competition at the same active site. This Prochlorococcus marinus (strain NATL1A) protein is Ribulose bisphosphate carboxylase large chain.